The primary structure comprises 394 residues: 5-azacytidine-induced protein 2 (394 aa).

Residues M1–D197 are homodimerization. Coiled-coil stretches lie at residues A40 to R76 and D102 to T196. Residues S216–C257 are interaction with TBK1 and IKBKE. S318 and S355 each carry phosphoserine. The segment at S355–P379 is disordered.

In terms of assembly, homodimer. Interacts with IKBKE, TBK1 and TICAM1. Interacts with TAX1BP1. Interacts with CALCOCO2. Ubiquitinated via 'Lys-48'-linked polyubiquitination by TRIM38, leading to its degradation.

Its subcellular location is the cytoplasm. Functionally, adapter protein which binds TBK1 and IKBKE playing a role in antiviral innate immunity. Activates serine/threonine-protein kinase TBK1 and facilitates its oligomerization. Enhances the phosphorylation of NF-kappa-B p65 subunit RELA by TBK1. Promotes TBK1-induced as well as TNF-alpha or PMA-induced activation of NF-kappa-B. Participates in IFNB promoter activation via TICAM1. This is 5-azacytidine-induced protein 2 (AZI2) from Macaca fascicularis (Crab-eating macaque).